The sequence spans 277 residues: Phosphonates import ATP-binding protein PhnC 2 (277 aa).

In terms of domain architecture, ABC transporter spans 5–253 (IHVQGLNKTF…FLNDLYGADA (249 aa)). Residue 37–44 (GASGSGKS) participates in ATP binding.

Belongs to the ABC transporter superfamily. Phosphonates importer (TC 3.A.1.9.1) family. The complex is composed of two ATP-binding proteins (PhnC), two transmembrane proteins (PhnE) and a solute-binding protein (PhnD).

The protein resides in the cell inner membrane. It catalyses the reaction phosphonate(out) + ATP + H2O = phosphonate(in) + ADP + phosphate + H(+). Part of the ABC transporter complex PhnCDE involved in phosphonates import. Responsible for energy coupling to the transport system. This chain is Phosphonates import ATP-binding protein PhnC 2, found in Pseudomonas syringae pv. syringae (strain B728a).